Here is a 500-residue protein sequence, read N- to C-terminus: Inner membrane transporter YjeM (500 aa).

Topologically, residues 1–10 (MTHTIKKMSL) are cytoplasmic. Residues 11–31 (IGLILMIFTSVFGFANSPSAF) traverse the membrane as a helical segment. At 32–37 (YLMGYS) the chain is on the periplasmic side. Residues 38–58 (AIPWYIFSALLFFIPFALMMA) traverse the membrane as a helical segment. At 59 to 83 (EMGSAYRKEEGGIYSWMNNSVGPRY) the chain is on the cytoplasmic side. A helical transmembrane segment spans residues 84–104 (AFIGTFMWFSSYVIWMVSTAA). Over 105 to 124 (KIWVPFSTFVFGADMTQHWR) the chain is Periplasmic. The helical transmembrane segment at 125–145 (IAGLEPTQVVGLLAVGWMILV) threads the bilayer. The Cytoplasmic segment spans residues 146–163 (TCVAARGINKIARITAVG). A helical transmembrane segment spans residues 164-184 (GIAVMCLNLVLLLVSVAILLL). At 185–209 (NGGHFAQEINFTSSPNPGYHSGLAM) the chain is on the periplasmic side. The chain crosses the membrane as a helical span at residues 210–230 (LSFVVFAIFAYGGIEAVGGLV). Over 231–243 (DKTEKPEKNFAKG) the chain is Cytoplasmic. The helical transmembrane segment at 244–264 (IVFAAIVISIGYSLAIFLWGV) threads the bilayer. Residues 265-308 (STNWQQILSNSAVNLGNITYILMSSLGTTLGNALNLSPEAAMTV) are Periplasmic-facing. Residues 309–329 (GVWFARITGLSMFLAYTGAFF) traverse the membrane as a helical segment. Residues 330-361 (TLSYSPLKAIIQGTPKALWPAPMTTLNANGMP) are Cytoplasmic-facing. Residues 362–382 (ATAMWLQCVLVSLFILLVSFG) traverse the membrane as a helical segment. The Periplasmic portion of the chain corresponds to 383-394 (GDTASAFYNKLT). A helical membrane pass occupies residues 395-415 (LMANVSMTLPYLFLALAFPFF). The Cytoplasmic segment spans residues 416–433 (KARQDLERPFVLFKTKAS). Residues 434 to 454 (TLVATGVVVLVVTFANVFTII) form a helical membrane-spanning segment. The Periplasmic segment spans residues 455–462 (QPVIEAGD). A helical membrane pass occupies residues 463 to 483 (WDSALWMIGGPIFFSLLAMAI). The Cytoplasmic portion of the chain corresponds to 484–500 (YQNYSSRMSADPEWAAE).

Belongs to the amino acid-polyamine-organocation (APC) superfamily.

It localises to the cell inner membrane. This chain is Inner membrane transporter YjeM (yjeM), found in Salmonella typhi.